Here is a 346-residue protein sequence, read N- to C-terminus: Beta-ketoacyl-[acyl-carrier-protein] synthase III (346 aa).

Active-site residues include Cys120 and His256. The ACP-binding stretch occupies residues 257–261 (QANIR). Asn286 is a catalytic residue.

The protein belongs to the thiolase-like superfamily. FabH family. In terms of assembly, homodimer.

It is found in the cytoplasm. The catalysed reaction is malonyl-[ACP] + acetyl-CoA + H(+) = 3-oxobutanoyl-[ACP] + CO2 + CoA. It functions in the pathway lipid metabolism; fatty acid biosynthesis. Catalyzes the condensation reaction of fatty acid synthesis by the addition to an acyl acceptor of two carbons from malonyl-ACP. Catalyzes the first condensation reaction which initiates fatty acid synthesis and may therefore play a role in governing the total rate of fatty acid production. Possesses both acetoacetyl-ACP synthase and acetyl transacylase activities. Its substrate specificity determines the biosynthesis of branched-chain and/or straight-chain of fatty acids. This chain is Beta-ketoacyl-[acyl-carrier-protein] synthase III, found in Deinococcus geothermalis (strain DSM 11300 / CIP 105573 / AG-3a).